The primary structure comprises 5147 residues: Cadherin-related tumor suppressor (5147 aa).

The first 35 residues, 1-35, serve as a signal peptide directing secretion; that stretch reads MERLLLLFFLLLAGRESLCQTGDTKLELLAPRGRS. Cadherin domains follow at residues 36–156, 157–270, 271–382, 383–494, 495–599, 600–708, 709–820, 821–942, 943–1049, 1050–1153, 1154–1278, 1279–1384, 1385–1489, 1490–1601, 1602–1713, 1714–1823, 1824–1922, 1923–2027, 2028–2167, 2168–2278, 2279–2385, 2386–2491, 2492–2596, 2597–2703, 2704–2810, 2811–2913, 2914–3013, 3014–3124, 3125–3229, 3230–3334, 3335–3439, 3440–3545, 3546–3651, and 3652–3756; these read YATT…SPEF, PEPS…PPIF, DHSD…DPII, SFRF…EPVF, EKSE…APQF, SQRE…DPQF, YPRH…LEML, ECGQ…APVF, ALDR…TPVF, DHTS…APQF, TNST…APEF, LRAP…APEF, TQSS…PPIF, PSTA…APVF, VSMN…VPQF, EQRS…PPQF, LDTP…PPLF, EDTV…APIF, DPMS…VPVF, ISAN…SPVF, DPKQ…PTFL, DSPY…DPVF, ELQS…IPKF, DSTT…FPTF, AYMA…APVM, EQLI…PPKF, TRLF…APEF, EHSF…PPKF, EQAE…TPRF, SVNS…PPVF, NHKE…YPQF, LQPV…PPEF, IKHY…GPTF, and TPEG…NPST. Over 36 to 4583 the chain is Extracellular; that stretch reads YATTYEQYAA…GQDAAQVADP (4548 aa). Asparagine 239, asparagine 257, asparagine 276, asparagine 280, asparagine 402, and asparagine 461 each carry an N-linked (GlcNAc...) asparagine glycan. Residues asparagine 605 and asparagine 631 are each glycosylated (N-linked (GlcNAc...) asparagine). Asparagine 1155, asparagine 1367, and asparagine 1458 each carry an N-linked (GlcNAc...) asparagine glycan. 3 N-linked (GlcNAc...) asparagine glycosylation sites follow: asparagine 1751, asparagine 1831, and asparagine 1880. N-linked (GlcNAc...) asparagine glycosylation is found at asparagine 2080, asparagine 2171, asparagine 2247, asparagine 2290, asparagine 2437, and asparagine 2581. Asparagine 2799 is a glycosylation site (N-linked (GlcNAc...) asparagine). 3 N-linked (GlcNAc...) asparagine glycosylation sites follow: asparagine 2920, asparagine 2946, and asparagine 2967. N-linked (GlcNAc...) asparagine glycosylation is found at asparagine 3167, asparagine 3303, asparagine 3386, asparagine 3389, and asparagine 3525. 3 N-linked (GlcNAc...) asparagine glycosylation sites follow: asparagine 3852, asparagine 3865, and asparagine 3905. EGF-like domains follow at residues 3950 to 4011, 4013 to 4049, 4052 to 4090, and 4092 to 4128; these read GYEP…EQCS, RQDP…KHCE, RSDV…NQCE, and VSDS…RHCE. 16 cysteine pairs are disulfide-bonded: cysteine 3954–cysteine 3966, cysteine 3960–cysteine 3999, cysteine 4001–cysteine 4010, cysteine 4017–cysteine 4028, cysteine 4022–cysteine 4037, cysteine 4039–cysteine 4048, cysteine 4056–cysteine 4067, cysteine 4061–cysteine 4078, cysteine 4080–cysteine 4089, cysteine 4096–cysteine 4107, cysteine 4101–cysteine 4116, cysteine 4118–cysteine 4127, cysteine 4294–cysteine 4320, cysteine 4325–cysteine 4341, cysteine 4334–cysteine 4350, and cysteine 4352–cysteine 4361. In terms of domain architecture, Laminin G-like 1 spans 4129–4320; that stretch reads RFSYGFQPLS…LQQKGILAGC (192 aa). The N-linked (GlcNAc...) asparagine glycan is linked to asparagine 4306. The EGF-like 5 domain occupies 4321–4362; the sequence is NRQACQPALAAERCGGFAGQCIDRWSSSLCQCGGHLQSPDCS. A Laminin G-like 2 domain is found at 4402–4569; it reads DNQQMRERRA…RYHGKIESGC (168 aa). Residues asparagine 4414, asparagine 4471, asparagine 4487, asparagine 4539, and asparagine 4550 are each glycosylated (N-linked (GlcNAc...) asparagine). Cysteine 4536 and cysteine 4569 are joined by a disulfide. Residues 4584–4609 form a helical membrane-spanning segment; sequence LSIGFTLVIVFFVILVVAILGSYVIY. Residues 4610 to 5147 are Cytoplasmic-facing; it reads RFRGKQEKIG…NGPAAPEEYV (538 aa). Positions 4744-4771 are essential for stability of mitochondrial electron chain complexes I and V, and promotes interaction with ND-24; the sequence is PEHYDLENASSIAPSDIDIVYHYKGYRE. Disordered regions lie at residues 4787-4850, 4871-4921, and 4967-5041; these read AYTH…SQQP, TSSS…QTSM, and GDVD…PIPP. Positions 4826–4835 are enriched in polar residues; it reads SASRTHQSTP. Low complexity-rich tracts occupy residues 4838-4850 and 4891-4918; these read RLSP…SQQP and SPVM…QAQQ. A Phosphoserine modification is found at serine 4843. The segment covering 4972-5008 has biased composition (polar residues); that stretch reads HSSTSTDESGNDSFTCSEIEYDNNSLSGDGKYSTSKS. Phosphoserine occurs at positions 5054 and 5061. The interval 5113-5147 is disordered; that stretch reads PDTNGPSQQQQQQTQVVSTLRMPSSNGPAAPEEYV. The span at 5119–5131 shows a compositional bias: low complexity; that stretch reads SQQQQQQTQVVST.

In terms of assembly, interacts with Fbxl7. Ft-mito interacts with NADH dehydrogenase subunit ND-24 and with ATP synthase subunit ATPsynC. Post-translationally, phosphorylated by fj on Ser/Thr of cadherin domains. Phosphorylation by fj enhances binding to ds. Phosphorylated in the cytoplasmic domain in a dco-dependent manner which is promoted by ds. In terms of processing, proteolytically cleaved to yield stably associated N- and C-terminal fragments. The C-terminal fragment is processed further to release a 68 kDa mitochondrial fragment, Ft-mito.

The protein resides in the cell membrane. It is found in the apical cell membrane. Its subcellular location is the mitochondrion. In terms of biological role, involved in regulation of planar cell polarity in the compound eye where it is required for correct specification of the R3 and R4 photoreceptor cells by regulating Fz activity in the R3/R4 precursor cells. This is likely to occur through creation of an ft gradient so that the equatorial R3/R4 precursor cell has a higher level of ft function than its polar neighbor. Also required for planar cell polarity of wing hairs. Mediates heterophilic cell adhesion in vitro and is required to stabilize ds on the cell surface. Involved in regulation of eye imaginal disk size. Upstream component of the Hippo pathway where it is likely to act as a cell surface receptor involved in regulation of tissue size and is required for the localization and stability of ex. Probably acts as a cell surface receptor for ds. Its function is as follows. Regulates mitochondrial electron transport chain integrity and promotes oxidative phosphorylation. This Drosophila melanogaster (Fruit fly) protein is Cadherin-related tumor suppressor.